We begin with the raw amino-acid sequence, 93 residues long: Small ribosomal subunit protein bS18 (93 aa).

It belongs to the bacterial ribosomal protein bS18 family. As to quaternary structure, part of the 30S ribosomal subunit. Forms a tight heterodimer with protein bS6.

Functionally, binds as a heterodimer with protein bS6 to the central domain of the 16S rRNA, where it helps stabilize the platform of the 30S subunit. This chain is Small ribosomal subunit protein bS18, found in Verminephrobacter eiseniae (strain EF01-2).